Reading from the N-terminus, the 266-residue chain is Glucosamine-6-phosphate deaminase (266 aa).

Aspartate 72 (proton acceptor; for enolization step) is an active-site residue. The active-site For ring-opening step is the aspartate 141. Residue histidine 143 is the Proton acceptor; for ring-opening step of the active site. Residue glutamate 148 is the For ring-opening step of the active site.

The protein belongs to the glucosamine/galactosamine-6-phosphate isomerase family. NagB subfamily. In terms of assembly, homohexamer.

The catalysed reaction is alpha-D-glucosamine 6-phosphate + H2O = beta-D-fructose 6-phosphate + NH4(+). It functions in the pathway amino-sugar metabolism; N-acetylneuraminate degradation; D-fructose 6-phosphate from N-acetylneuraminate: step 5/5. Allosterically activated by N-acetylglucosamine 6-phosphate (GlcNAc6P). Catalyzes the reversible isomerization-deamination of glucosamine 6-phosphate (GlcN6P) to form fructose 6-phosphate (Fru6P) and ammonium ion. This is Glucosamine-6-phosphate deaminase from Salmonella arizonae (strain ATCC BAA-731 / CDC346-86 / RSK2980).